The sequence spans 189 residues: dCTP deaminase (189 aa).

DCTP contacts are provided by residues 112–117 (KSTYAR), 136–138 (TLE), Gln157, Tyr171, and Gln181. Glu138 serves as the catalytic Proton donor/acceptor.

The protein belongs to the dCTP deaminase family. As to quaternary structure, homotrimer.

The catalysed reaction is dCTP + H2O + H(+) = dUTP + NH4(+). Its pathway is pyrimidine metabolism; dUMP biosynthesis; dUMP from dCTP (dUTP route): step 1/2. Functionally, catalyzes the deamination of dCTP to dUTP. The sequence is that of dCTP deaminase from Burkholderia mallei (strain NCTC 10247).